We begin with the raw amino-acid sequence, 314 residues long: Ribosomal RNA small subunit methyltransferase H (314 aa).

Residues 36–38, Asp56, Phe81, Asp103, and Gln110 each bind S-adenosyl-L-methionine; that span reads GGH.

It belongs to the methyltransferase superfamily. RsmH family.

Its subcellular location is the cytoplasm. It catalyses the reaction cytidine(1402) in 16S rRNA + S-adenosyl-L-methionine = N(4)-methylcytidine(1402) in 16S rRNA + S-adenosyl-L-homocysteine + H(+). Its function is as follows. Specifically methylates the N4 position of cytidine in position 1402 (C1402) of 16S rRNA. The chain is Ribosomal RNA small subunit methyltransferase H from Shewanella sediminis (strain HAW-EB3).